Consider the following 193-residue polypeptide: dCTP deaminase (193 aa).

DCTP is bound by residues 110–115 (RSSLAR), Asp-128, 136–138 (VLE), Tyr-171, Lys-178, and Gln-182. Glu-138 (proton donor/acceptor) is an active-site residue. The interval 173 to 193 (KRKNAKYKDQQDAVASRISQD) is disordered.

This sequence belongs to the dCTP deaminase family. As to quaternary structure, homotrimer.

The enzyme catalyses dCTP + H2O + H(+) = dUTP + NH4(+). Its pathway is pyrimidine metabolism; dUMP biosynthesis; dUMP from dCTP (dUTP route): step 1/2. Catalyzes the deamination of dCTP to dUTP. This Shewanella sp. (strain ANA-3) protein is dCTP deaminase.